The chain runs to 487 residues: Meiotic recombination protein SPO11-4 (487 aa).

The disordered stretch occupies residues 1–56 (MDDSTDDDSYHPRKHYAYDRQVSSSRWRTSREYIRGPGPETHTTESAQDGQDPPAG). Residues 119–252 (KSRVEARKTL…LGIIAAEKGI (134 aa)) enclose the Topo IIA-type catalytic domain. Tyr213 serves as the catalytic O-(5'-phospho-DNA)-tyrosine intermediate. Residues Glu301 and Asp353 each coordinate Mg(2+).

This sequence belongs to the TOP6A family. Homodimer. Interacts with TOP6B. Mg(2+) is required as a cofactor.

Its subcellular location is the nucleus. The catalysed reaction is ATP-dependent breakage, passage and rejoining of double-stranded DNA.. Functionally, required for meiotic recombination. Mediates DNA cleavage that forms the double-strand breaks (DSB) that initiate meiotic recombination. Possesses double-stranded DNA cleavage activity in vitro. In Oryza sativa subsp. japonica (Rice), this protein is Meiotic recombination protein SPO11-4 (SPO11-4).